The primary structure comprises 658 residues: Probable CoA ligase CCL6 (658 aa).

Residues 226-234 (TSGATGEPK), 411-416 (QGYGLT), Asp-497, 509-512 (IIDR), and Lys-632 each bind ATP. Residues 298-411 (DIRFLMDDLQ…RVTSCAALSQ (114 aa)) form an SBD1 region. The interval 412-477 (GYGLTESCGG…LRGTTLFSGY (66 aa)) is SBD2.

This sequence belongs to the ATP-dependent AMP-binding enzyme family. In terms of tissue distribution, mostly expressed in glandular trichomes (lupulin glands) after flowering, and, to a lower extent, in stems, leaves, cones and flowers.

The protein localises to the cytoplasm. Its subcellular location is the cytosol. This is Probable CoA ligase CCL6 from Humulus lupulus (European hop).